Here is a 283-residue protein sequence, read N- to C-terminus: Phosphate import ATP-binding protein PstB (283 aa).

Residues 1–20 (MAQTLAQTKQISQSHTFDVS) are compositionally biased toward polar residues. The interval 1–33 (MAQTLAQTKQISQSHTFDVSQSHHKTPNDTNSH) is disordered. Residues 37–278 (YSTQNLDLWY…PSNKKTEDYI (242 aa)) form the ABC transporter domain. An ATP-binding site is contributed by 69–76 (GPSGCGKS).

This sequence belongs to the ABC transporter superfamily. Phosphate importer (TC 3.A.1.7) family. In terms of assembly, the complex is composed of two ATP-binding proteins (PstB), two transmembrane proteins (PstC and PstA) and a solute-binding protein (PstS).

It is found in the cell membrane. It carries out the reaction phosphate(out) + ATP + H2O = ADP + 2 phosphate(in) + H(+). Its function is as follows. Part of the ABC transporter complex PstSACB involved in phosphate import. Responsible for energy coupling to the transport system. This is Phosphate import ATP-binding protein PstB from Staphylococcus aureus (strain bovine RF122 / ET3-1).